Here is a 263-residue protein sequence, read N- to C-terminus: Acyl-[acyl-carrier-protein]--UDP-N-acetylglucosamine O-acyltransferase (263 aa).

This sequence belongs to the transferase hexapeptide repeat family. LpxA subfamily. In terms of assembly, homotrimer.

It localises to the cytoplasm. The catalysed reaction is a (3R)-hydroxyacyl-[ACP] + UDP-N-acetyl-alpha-D-glucosamine = a UDP-3-O-[(3R)-3-hydroxyacyl]-N-acetyl-alpha-D-glucosamine + holo-[ACP]. It participates in glycolipid biosynthesis; lipid IV(A) biosynthesis; lipid IV(A) from (3R)-3-hydroxytetradecanoyl-[acyl-carrier-protein] and UDP-N-acetyl-alpha-D-glucosamine: step 1/6. In terms of biological role, involved in the biosynthesis of lipid A, a phosphorylated glycolipid that anchors the lipopolysaccharide to the outer membrane of the cell. This chain is Acyl-[acyl-carrier-protein]--UDP-N-acetylglucosamine O-acyltransferase, found in Campylobacter lari (strain RM2100 / D67 / ATCC BAA-1060).